A 719-amino-acid polypeptide reads, in one-letter code: Fatty acid oxidation complex subunit alpha (719 aa).

The segment at Met1 to Ala190 is enoyl-CoA hydratase/isomerase. Asp298 serves as a coordination point for substrate. Positions His313–Ala719 are 3-hydroxyacyl-CoA dehydrogenase. NAD(+)-binding positions include Met326, Asp345, Val402–Glu404, Lys409, and Ser431. His452 acts as the For 3-hydroxyacyl-CoA dehydrogenase activity in catalysis. Asn455 is an NAD(+) binding site. Asn502 contributes to the substrate binding site.

The protein in the N-terminal section; belongs to the enoyl-CoA hydratase/isomerase family. In the C-terminal section; belongs to the 3-hydroxyacyl-CoA dehydrogenase family. Heterotetramer of two alpha chains (FadB) and two beta chains (FadA).

The enzyme catalyses a (3S)-3-hydroxyacyl-CoA + NAD(+) = a 3-oxoacyl-CoA + NADH + H(+). It catalyses the reaction a (3S)-3-hydroxyacyl-CoA = a (2E)-enoyl-CoA + H2O. The catalysed reaction is a 4-saturated-(3S)-3-hydroxyacyl-CoA = a (3E)-enoyl-CoA + H2O. It carries out the reaction (3S)-3-hydroxybutanoyl-CoA = (3R)-3-hydroxybutanoyl-CoA. The enzyme catalyses a (3Z)-enoyl-CoA = a 4-saturated (2E)-enoyl-CoA. It catalyses the reaction a (3E)-enoyl-CoA = a 4-saturated (2E)-enoyl-CoA. It functions in the pathway lipid metabolism; fatty acid beta-oxidation. In terms of biological role, involved in the aerobic and anaerobic degradation of long-chain fatty acids via beta-oxidation cycle. Catalyzes the formation of 3-oxoacyl-CoA from enoyl-CoA via L-3-hydroxyacyl-CoA. It can also use D-3-hydroxyacyl-CoA and cis-3-enoyl-CoA as substrate. The polypeptide is Fatty acid oxidation complex subunit alpha (Psychrobacter arcticus (strain DSM 17307 / VKM B-2377 / 273-4)).